The primary structure comprises 1809 residues: Stereocilin (1809 aa).

The first 22 residues, 1–22, serve as a signal peptide directing secretion; that stretch reads MALSLQPQLLLLLSLLPQEVTS. Asn-63, Asn-200, Asn-295, Asn-352, and Asn-364 each carry an N-linked (GlcNAc...) asparagine glycan. The tract at residues 376–426 is disordered; the sequence is PATPRPPPTTPRPPPTTPQPPPTTTQPIPDTTQPPPVTPRPPPTTPQPPPS. Composition is skewed to pro residues over residues 378-399 and 407-426; these read TPRPPPTTPRPPPTTPQPPPTT and TQPPPVTPRPPPTTPQPPPS. N-linked (GlcNAc...) asparagine glycosylation is found at Asn-467, Asn-516, Asn-580, Asn-605, Asn-696, Asn-860, Asn-952, Asn-1000, Asn-1213, and Asn-1308.

The protein belongs to the stereocilin family. Strongly expressed in the inner ear, detected in the testis, and barely detected in the eye. Detected in the six sensory areas of the inner ear by immunofluorescence. Expressed only in the sensory hair cells and associated with the stereocilia, the stiff microvilli forming the structure for mechanoreception of sound stimulation.

The protein resides in the cell surface. It localises to the cell projection. It is found in the kinocilium. Its subcellular location is the stereocilium. In terms of biological role, essential to the formation of horizontal top connectors between outer hair cell stereocilia. This Mus musculus (Mouse) protein is Stereocilin (Strc).